The sequence spans 171 residues: ATP synthase subunit b (171 aa).

Residues leucine 14–valine 34 traverse the membrane as a helical segment. The span at serine 56–arginine 97 shows a compositional bias: basic and acidic residues. The segment at serine 56–alanine 104 is disordered.

The protein belongs to the ATPase B chain family. In terms of assembly, F-type ATPases have 2 components, F(1) - the catalytic core - and F(0) - the membrane proton channel. F(1) has five subunits: alpha(3), beta(3), gamma(1), delta(1), epsilon(1). F(0) has three main subunits: a(1), b(2) and c(10-14). The alpha and beta chains form an alternating ring which encloses part of the gamma chain. F(1) is attached to F(0) by a central stalk formed by the gamma and epsilon chains, while a peripheral stalk is formed by the delta and b chains.

The protein localises to the cell membrane. In terms of biological role, f(1)F(0) ATP synthase produces ATP from ADP in the presence of a proton or sodium gradient. F-type ATPases consist of two structural domains, F(1) containing the extramembraneous catalytic core and F(0) containing the membrane proton channel, linked together by a central stalk and a peripheral stalk. During catalysis, ATP synthesis in the catalytic domain of F(1) is coupled via a rotary mechanism of the central stalk subunits to proton translocation. Its function is as follows. Component of the F(0) channel, it forms part of the peripheral stalk, linking F(1) to F(0). This chain is ATP synthase subunit b, found in Lactiplantibacillus plantarum (strain ATCC BAA-793 / NCIMB 8826 / WCFS1) (Lactobacillus plantarum).